We begin with the raw amino-acid sequence, 67 residues long: MGNIRQTFIKRVARELFDRYPDQFTKDFEHNKKKVGELTNVTSKTIRNRIAGYITRLVRMKEEGKML.

It belongs to the eukaryotic ribosomal protein eS17 family.

In Thermococcus onnurineus (strain NA1), this protein is Small ribosomal subunit protein eS17.